We begin with the raw amino-acid sequence, 376 residues long: tRNA-specific 2-thiouridylase MnmA (376 aa).

ATP contacts are provided by residues 10 to 17 and Met-36; that span reads GMSGGVDS. Residues 96–98 are interaction with target base in tRNA; sequence NPD. The active-site Nucleophile is the Cys-101. A disulfide bond links Cys-101 and Cys-198. An ATP-binding site is contributed by Gly-125. The interval 148-150 is interaction with tRNA; it reads KDQ. The Cysteine persulfide intermediate role is filled by Cys-198. Residues 305–306 form an interaction with tRNA region; the sequence is RY.

Belongs to the MnmA/TRMU family.

The protein localises to the cytoplasm. It carries out the reaction S-sulfanyl-L-cysteinyl-[protein] + uridine(34) in tRNA + AH2 + ATP = 2-thiouridine(34) in tRNA + L-cysteinyl-[protein] + A + AMP + diphosphate + H(+). Catalyzes the 2-thiolation of uridine at the wobble position (U34) of tRNA, leading to the formation of s(2)U34. This Protochlamydia amoebophila (strain UWE25) protein is tRNA-specific 2-thiouridylase MnmA.